Here is a 418-residue protein sequence, read N- to C-terminus: Tyrosine--tRNA ligase (418 aa).

Position 38 (Y38) interacts with L-tyrosine. The 'HIGH' region signature appears at 43–52 (CTAKSLHVGS). Y175 and Q179 together coordinate L-tyrosine. The short motif at 235-239 (KMGKT) is the 'KMSKS' region element. ATP is bound at residue K238. The 66-residue stretch at 348–413 (LPIIKLLQMC…CGKKRHLKVM (66 aa)) folds into the S4 RNA-binding domain.

The protein belongs to the class-I aminoacyl-tRNA synthetase family. TyrS type 1 subfamily. Homodimer.

Its subcellular location is the cytoplasm. The enzyme catalyses tRNA(Tyr) + L-tyrosine + ATP = L-tyrosyl-tRNA(Tyr) + AMP + diphosphate + H(+). In terms of biological role, catalyzes the attachment of tyrosine to tRNA(Tyr) in a two-step reaction: tyrosine is first activated by ATP to form Tyr-AMP and then transferred to the acceptor end of tRNA(Tyr). The sequence is that of Tyrosine--tRNA ligase from Ehrlichia chaffeensis (strain ATCC CRL-10679 / Arkansas).